The chain runs to 168 residues: Large ribosomal subunit protein uL11 (168 aa).

The protein belongs to the universal ribosomal protein uL11 family. In terms of assembly, part of the ribosomal stalk of the 50S ribosomal subunit. Interacts with L10 and the large rRNA to form the base of the stalk. L10 forms an elongated spine to which L12 dimers bind in a sequential fashion forming a multimeric L10(L12)X complex.

Its function is as follows. Forms part of the ribosomal stalk which helps the ribosome interact with GTP-bound translation factors. This Metallosphaera sedula (strain ATCC 51363 / DSM 5348 / JCM 9185 / NBRC 15509 / TH2) protein is Large ribosomal subunit protein uL11.